A 206-amino-acid polypeptide reads, in one-letter code: Small ribosomal subunit protein uS4 (206 aa).

The 61-residue stretch at 96 to 156 (CRLDNVVYRM…EKAKNQLRIV (61 aa)) folds into the S4 RNA-binding domain.

The protein belongs to the universal ribosomal protein uS4 family. In terms of assembly, part of the 30S ribosomal subunit. Contacts protein S5. The interaction surface between S4 and S5 is involved in control of translational fidelity.

In terms of biological role, one of the primary rRNA binding proteins, it binds directly to 16S rRNA where it nucleates assembly of the body of the 30S subunit. Functionally, with S5 and S12 plays an important role in translational accuracy. The sequence is that of Small ribosomal subunit protein uS4 from Pseudomonas fluorescens (strain Pf0-1).